The sequence spans 250 residues: Diaminopimelate epimerase (250 aa).

2 residues coordinate substrate: Asn11 and Asn60. Cys69 functions as the Proton donor in the catalytic mechanism. Substrate-binding positions include Gly70–Asn71, Asn164, and Glu182–Arg183. Cys192 serves as the catalytic Proton acceptor. Position 193–194 (Gly193–Thr194) interacts with substrate.

Belongs to the diaminopimelate epimerase family. In terms of assembly, homodimer.

Its subcellular location is the cytoplasm. It catalyses the reaction (2S,6S)-2,6-diaminopimelate = meso-2,6-diaminopimelate. Its pathway is amino-acid biosynthesis; L-lysine biosynthesis via DAP pathway; DL-2,6-diaminopimelate from LL-2,6-diaminopimelate: step 1/1. Its function is as follows. Catalyzes the stereoinversion of LL-2,6-diaminopimelate (L,L-DAP) to meso-diaminopimelate (meso-DAP), a precursor of L-lysine and an essential component of the bacterial peptidoglycan. This is Diaminopimelate epimerase from Nitratiruptor sp. (strain SB155-2).